We begin with the raw amino-acid sequence, 487 residues long: Phosphatidylserine synthase 2 (487 aa).

Residues Met1–Gly10 are compositionally biased toward basic and acidic residues. Residues Met1–Glu50 are disordered. Topologically, residues Met1–Arg62 are cytoplasmic. Phosphoserine is present on residues Ser16 and Ser24. A helical membrane pass occupies residues Ala63–Glu83. Residues Glu84 to Gly96 are Lumenal-facing. The helical transmembrane segment at Ile97–Phe117 threads the bilayer. Residues Ser118 to Arg126 lie on the Cytoplasmic side of the membrane. Residues Phe127–Val147 form a helical membrane-spanning segment. Residues Gln148–Arg313 lie on the Lumenal side of the membrane. Asn181 is a glycosylation site (N-linked (GlcNAc...) asparagine). The chain crosses the membrane as a helical span at residues Trp314 to Leu334. Lys335 is a topological domain (cytoplasmic). The helical transmembrane segment at Phe336 to Asn356 threads the bilayer. Over Val357–Lys376 the chain is Lumenal. The chain crosses the membrane as a helical span at residues Lys377 to Val397. Topologically, residues Lys398–Thr403 are cytoplasmic. The chain crosses the membrane as a helical span at residues Leu404 to Leu424. Over Thr425–Asn487 the chain is Lumenal. A disordered region spans residues Lys451–Asn487. Position 485 is a phosphothreonine (Thr485).

The protein belongs to the phosphatidyl serine synthase family.

It is found in the endoplasmic reticulum membrane. The enzyme catalyses a 1,2-diacyl-sn-glycero-3-phosphoethanolamine + L-serine = a 1,2-diacyl-sn-glycero-3-phospho-L-serine + ethanolamine. The catalysed reaction is 1-hexadecanoyl-2-(9Z-octadecenoyl)-sn-glycero-3-phosphoethanolamine + L-serine = 1-hexadecanoyl-2-(9Z-octadecenoyl)-sn-glycero-3-phospho-L-serine + ethanolamine. It carries out the reaction 1-hexadecanoyl-2-(4Z,7Z,10Z,13Z,16Z,19Z-docosahexaenoyl)-sn-glycero-3-phosphoethanolamine + L-serine = 1-hexadecanoyl-2-(4Z,7Z,10Z,13Z,16Z,19Z-docosahexaenoyl)-sn-glycero-3-phosphoserine + ethanolamine. It catalyses the reaction 1-octadecanoyl-2-(5Z,8Z,11Z,14Z)-eicosatetraenoyl-sn-glycero-3-phosphoethanolamine + L-serine = 1-octadecanoyl-2-(5Z,8Z,11Z,14Z)-eicosatetraenoyl-sn-glycero-3-phosphoserine + ethanolamine. The enzyme catalyses 1-octadecanoyl-2-(4Z,7Z,10Z,13Z,16Z,19Z-docosahexaenoyl)-sn-glycero-3-phosphoethanolamine + L-serine = 1-octadecanoyl-2-(4Z,7Z,10Z,13Z,16Z,19Z-docosahexaenoyl)-sn-glycero-3-phosphoserine + ethanolamine. The catalysed reaction is 1-(1Z-octadecenyl)-2-(4Z,7Z,10Z,13Z,16Z,19Z-docosahexaenoyl)-sn-glycero-3-phosphoethanolamine + L-serine = 1-(1Z-octadecenyl)-2-(4Z,7Z,10Z,13Z,16Z,19Z-docosahexaenoyl)-sn-glycero-3-phospho-L-serine + ethanolamine. It carries out the reaction 1-octadecanoyl-2-(9Z-octadecenoyl)-sn-glycero-3-phosphoethanolamine + L-serine = 1-octadecanoyl-2-(9Z-octadecenoyl)-sn-glycero-3-phospho-L-serine + ethanolamine. It catalyses the reaction 1-(1Z-octadecenyl)-2-(9Z-octadecenoyl)-sn-glycero-3-phosphoethanolamine + L-serine = 1-(1Z-octadecenyl)-2-(9Z-octadecenoyl)-sn-glycero-3-phospho-L-serine + ethanolamine. The enzyme catalyses 1-(1Z-octadecenyl)-2-(5Z,8Z,11Z,14Z- eicosatetraenoyl)-sn-glycero-3-phosphoethanolamine + L-serine = 1-(1Z-octadecenyl)-2-(5Z,8Z,11Z,14Z-eicosatetraenoyl)-sn-glycero-3-phospho-L-serine + ethanolamine. It participates in phospholipid metabolism; phosphatidylserine biosynthesis. Its activity is regulated as follows. Requires calcium ions. Inhibited by exogenous phosphatidylserine. Its function is as follows. Catalyzes a base-exchange reaction in which the polar head group of phosphatidylethanolamine (PE) or phosphatidylcholine (PC) is replaced by L-serine. Catalyzes the conversion of phosphatatidylethanolamine and does not act on phosphatidylcholine. Can utilize both phosphatidylethanolamine (PE) plasmalogen and diacyl PE as substrate and the latter is six times better utilized, indicating the importance of an ester linkage at the sn-1 position. Although it shows no sn-1 fatty acyl preference, exhibits significant preference towards docosahexaenoic acid (22:6n-3) compared with 18:1 or 20:4 at the sn-2 position. This is Phosphatidylserine synthase 2 (PTDSS2) from Homo sapiens (Human).